The chain runs to 151 residues: Small ribosomal subunit protein bS6 (151 aa).

The segment at 96–151 (HEEGQSAMLTRRDDRRERDGDDRPRRREGGFDRGDRGDRGDRGPRRPRDNEAGEGA) is disordered.

It belongs to the bacterial ribosomal protein bS6 family.

Its function is as follows. Binds together with bS18 to 16S ribosomal RNA. In Brucella anthropi (strain ATCC 49188 / DSM 6882 / CCUG 24695 / JCM 21032 / LMG 3331 / NBRC 15819 / NCTC 12168 / Alc 37) (Ochrobactrum anthropi), this protein is Small ribosomal subunit protein bS6.